The following is a 511-amino-acid chain: Cytochrome P450 89A9 (511 aa).

Residues 6 to 26 (IIFLIISSLTFSIFLKLIFFF) form a helical; Signal-anchor for type II membrane protein membrane-spanning segment. C454 lines the heme pocket.

It belongs to the cytochrome P450 family. Heme is required as a cofactor.

The protein resides in the endoplasmic reticulum membrane. It carries out the reaction primary fluorescent chlorophyll catabolite + reduced [NADPH--hemoprotein reductase] + O2 = primary fluorescent dioxobilin-type chlorophyll catabolite + formate + oxidized [NADPH--hemoprotein reductase] + 2 H(+). The protein operates within porphyrin-containing compound metabolism; chlorophyll degradation. Functionally, involved in the chlorophyll breakdown by its action in nonpolar primary fluorescent chlorophyll catabolite (pFCC) decarbonylation. Involved in the formation of major chlorophyll breakdown products, including non-fluorescent dioxobilin-type chlorophyll catabolites (NDCCs), during leaf senescence. In Arabidopsis thaliana (Mouse-ear cress), this protein is Cytochrome P450 89A9.